A 45-amino-acid polypeptide reads, in one-letter code: Large ribosomal subunit protein bL34c (45 aa).

Belongs to the bacterial ribosomal protein bL34 family.

It localises to the plastid. The protein localises to the chloroplast. The chain is Large ribosomal subunit protein bL34c from Emiliania huxleyi (Coccolithophore).